We begin with the raw amino-acid sequence, 478 residues long: Cytochrome c-552 (478 aa).

The N-terminal stretch at 1–26 (MARKTLRARRFFSLIFPFFFITSVYA) is a signal peptide. His-94 is a binding site for heme c. Residues Cys-122, Cys-125, and Lys-126 each coordinate heme. Heme c is bound by residues Cys-160, Cys-163, His-164, Cys-209, Cys-212, and His-213. Ca(2+) is bound by residues Glu-215, Tyr-216, Lys-261, and Gln-263. Tyr-216 provides a ligand contact to substrate. A substrate-binding site is contributed by His-264. The heme c site is built by His-275, Cys-282, Cys-285, His-286, His-301, Cys-314, Cys-317, His-318, and His-393.

The protein belongs to the cytochrome c-552 family. Ca(2+) is required as a cofactor. Heme c serves as cofactor.

It is found in the periplasm. It carries out the reaction 6 Fe(III)-[cytochrome c] + NH4(+) + 2 H2O = 6 Fe(II)-[cytochrome c] + nitrite + 8 H(+). It functions in the pathway nitrogen metabolism; nitrate reduction (assimilation). Functionally, catalyzes the reduction of nitrite to ammonia, consuming six electrons in the process. This Salmonella paratyphi A (strain ATCC 9150 / SARB42) protein is Cytochrome c-552.